The following is a 315-amino-acid chain: Cysteine proteinase 1 (315 aa).

An N-terminal signal peptide occupies residues 1–13 (MFTFILMFYIGYG). Residues 14–93 (IDFNTWVANN…KGEVRYLNIQ (80 aa)) constitute a propeptide, activation peptide. Cystine bridges form between Cys115–Cys161 and Cys152–Cys193. The active site involves Cys118. Residues His259 and Asn279 contribute to the active site.

Belongs to the peptidase C1 family.

It localises to the lysosome. With respect to regulation, inhibited by cysteine protease inhibitors ICP1 and ICP2. In terms of biological role, cysteine protease which degrades matrix proteins such as collagen, laminin and fibronectin and thus is involved in the destruction of human tissue. Can abolish adhesion. May play an important role in pathogenicity. The sequence is that of Cysteine proteinase 1 from Entamoeba histolytica (strain ATCC 30459 / HM-1:IMSS / ABRM).